A 411-amino-acid chain; its full sequence is tRNA (guanine(37)-N(1))-methyltransferase (411 aa).

S-adenosyl-L-methionine-binding positions include H216, 254 to 255 (DL), 282 to 283 (DG), and N303. The tract at residues 391-411 (ERQASKQDDPKRRKVAAENAA) is disordered.

It belongs to the class I-like SAM-binding methyltransferase superfamily. TRM5/TYW2 family. In terms of assembly, monomer.

Its subcellular location is the mitochondrion matrix. The protein localises to the nucleus. It is found in the cytoplasm. The enzyme catalyses guanosine(37) in tRNA + S-adenosyl-L-methionine = N(1)-methylguanosine(37) in tRNA + S-adenosyl-L-homocysteine + H(+). Functionally, specifically methylates the N1 position of guanosine-37 in various cytoplasmic and mitochondrial tRNAs. Methylation is not dependent on the nature of the nucleoside 5' of the target nucleoside. This is the first step in the biosynthesis of wybutosine (yW), a modified base adjacent to the anticodon of tRNAs and required for accurate decoding. In Phytophthora infestans (strain T30-4) (Potato late blight agent), this protein is tRNA (guanine(37)-N(1))-methyltransferase.